Reading from the N-terminus, the 1358-residue chain is Phosphoribosylformylglycinamidine synthase (1358 aa).

Threonine 2 carries the post-translational modification N-acetylthreonine. Positions 339–363 are disordered; sequence AVSPFPGAATGSGGEIRDEGATGRG. ATP-binding positions include 345–356, 424–426, and alanine 719; these read GAATGSGGEIRD and NGY. The Mg(2+) site is built by aspartate 720, glutamate 762, asparagine 766, and aspartate 930. Serine 932 contacts ATP. Positions 1093-1358 constitute a Glutamine amidotransferase type-1 domain; the sequence is VAILREQGVN…LFRSARRWVG (266 aa). Cysteine 1187 acts as the Nucleophile in catalysis. Active-site residues include histidine 1319 and glutamate 1321.

In the N-terminal section; belongs to the FGAMS family.

The protein localises to the cytoplasm. The catalysed reaction is N(2)-formyl-N(1)-(5-phospho-beta-D-ribosyl)glycinamide + L-glutamine + ATP + H2O = 2-formamido-N(1)-(5-O-phospho-beta-D-ribosyl)acetamidine + L-glutamate + ADP + phosphate + H(+). The protein operates within purine metabolism; IMP biosynthesis via de novo pathway; 5-amino-1-(5-phospho-D-ribosyl)imidazole from N(2)-formyl-N(1)-(5-phospho-D-ribosyl)glycinamide: step 1/2. Phosphoribosylformylglycinamidine synthase involved in the purines biosynthetic pathway. Catalyzes the ATP-dependent conversion of formylglycinamide ribonucleotide (FGAR) and glutamine to yield formylglycinamidine ribonucleotide (FGAM) and glutamate. The protein is Phosphoribosylformylglycinamidine synthase (ADE6) of Saccharomyces cerevisiae (strain ATCC 204508 / S288c) (Baker's yeast).